The following is a 106-amino-acid chain: Large ribosomal subunit protein eL42 (106 aa).

This sequence belongs to the eukaryotic ribosomal protein eL42 family.

The sequence is that of Large ribosomal subunit protein eL42 (RPL44) from Debaryomyces hansenii (strain ATCC 36239 / CBS 767 / BCRC 21394 / JCM 1990 / NBRC 0083 / IGC 2968) (Yeast).